The sequence spans 212 residues: Ribonuclease P protein component 3 (212 aa).

Belongs to the eukaryotic/archaeal RNase P protein component 3 family. Consists of a catalytic RNA component and at least 5 protein subunits. Forms a heterotetrameric subcomplex with Rnp2. Reconstituted enzyme missing individual protein subunits is suboptimally active, showing each subunit contributes to optimization of activity.

The protein resides in the cytoplasm. The enzyme catalyses Endonucleolytic cleavage of RNA, removing 5'-extranucleotides from tRNA precursor.. In terms of biological role, part of ribonuclease P, a protein complex that generates mature tRNA molecules by cleaving their 5'-ends. Not absolutely essential for activity in vitro, however it strongly stimulates activity. Binds RNase P RNA. This Pyrococcus horikoshii (strain ATCC 700860 / DSM 12428 / JCM 9974 / NBRC 100139 / OT-3) protein is Ribonuclease P protein component 3.